The following is a 335-amino-acid chain: Dihydroorotate dehydrogenase (quinone) (335 aa).

FMN is bound by residues 59–63 (AGLDK) and threonine 83. Position 63 (lysine 63) interacts with substrate. 108 to 112 (NRMGF) lines the substrate pocket. FMN is bound by residues asparagine 136 and asparagine 169. Asparagine 169 is a substrate binding site. Serine 172 acts as the Nucleophile in catalysis. Asparagine 174 provides a ligand contact to substrate. FMN contacts are provided by lysine 214 and threonine 242. Substrate is bound at residue 243–244 (NT). FMN-binding positions include glycine 265, glycine 294, and 315–316 (YS).

It belongs to the dihydroorotate dehydrogenase family. Type 2 subfamily. In terms of assembly, monomer. It depends on FMN as a cofactor.

The protein localises to the cell membrane. The catalysed reaction is (S)-dihydroorotate + a quinone = orotate + a quinol. It functions in the pathway pyrimidine metabolism; UMP biosynthesis via de novo pathway; orotate from (S)-dihydroorotate (quinone route): step 1/1. Its function is as follows. Catalyzes the conversion of dihydroorotate to orotate with quinone as electron acceptor. This chain is Dihydroorotate dehydrogenase (quinone), found in Neisseria meningitidis serogroup A / serotype 4A (strain DSM 15465 / Z2491).